Reading from the N-terminus, the 103-residue chain is uncharacterized protein (103 aa).

2 helical membrane passes run 13–33 (LLPFIFIYLSVANKIMFYCIL) and 77–97 (FSIYIYIYFFFYSFLCSPYLF).

It is found in the endoplasmic reticulum membrane. This is an uncharacterized protein from Schizosaccharomyces pombe (strain 972 / ATCC 24843) (Fission yeast).